The primary structure comprises 64 residues: Conotoxin Tx3.5-a (64 aa).

The N-terminal stretch at 1–19 (MSKLGVLLTICLLLFPLTA) is a signal peptide. A propeptide spanning residues 20–47 (LPLDGDQPADQAAERMQAEQHPLFDQKR) is cleaved from the precursor. 3 disulfides stabilise this stretch: Cys49–Cys58, Cys50–Cys62, and Cys54–Cys63. Cys63 carries the post-translational modification Cysteine amide.

This sequence belongs to the conotoxin M superfamily. Post-translationally, contains 3 disulfide bonds. Two peptides are produced from this precursor. Conotoxin Tx3.5-b is amidated at Cys-63, conotoxin Tx3.5-a has an unmodified C-terminus. As to expression, expressed by the venom duct. Is present in all duct parts with a highest content in part 2 (proximal of the venom bulb) and then decreases in concentration toward the end of the duct.

Its subcellular location is the secreted. The chain is Conotoxin Tx3.5-a from Conus textile (Cloth-of-gold cone).